The chain runs to 339 residues: Putative zinc metalloprotease CA_C1796 (339 aa).

Residue His20 participates in Zn(2+) binding. Residue Glu21 is part of the active site. His24 is a Zn(2+) binding site. Transmembrane regions (helical) follow at residues 91 to 113 (LSIVIAGPIMNLILAAVLFCIVG), 275 to 297 (QLGVMNLLPIPALDGGFVFLFLF), and 310 to 330 (VGFVNTIGFALLMILMIVVTI). The PDZ domain occupies 99–177 (IMNLILAAVL…GIKLALKNNG (79 aa)).

This sequence belongs to the peptidase M50B family. It depends on Zn(2+) as a cofactor.

The protein localises to the cell membrane. The protein is Putative zinc metalloprotease CA_C1796 of Clostridium acetobutylicum (strain ATCC 824 / DSM 792 / JCM 1419 / IAM 19013 / LMG 5710 / NBRC 13948 / NRRL B-527 / VKM B-1787 / 2291 / W).